Here is a 203-residue protein sequence, read N- to C-terminus: Pyridoxal 5'-phosphate synthase subunit PdxT (203 aa).

54-56 is a binding site for L-glutamine; sequence GES. Cys86 serves as the catalytic Nucleophile. L-glutamine contacts are provided by residues Arg113 and 141–142; that span reads IR. Active-site charge relay system residues include His177 and Glu179.

The protein belongs to the glutaminase PdxT/SNO family. In the presence of PdxS, forms a dodecamer of heterodimers. Only shows activity in the heterodimer.

It carries out the reaction aldehydo-D-ribose 5-phosphate + D-glyceraldehyde 3-phosphate + L-glutamine = pyridoxal 5'-phosphate + L-glutamate + phosphate + 3 H2O + H(+). The catalysed reaction is L-glutamine + H2O = L-glutamate + NH4(+). The protein operates within cofactor biosynthesis; pyridoxal 5'-phosphate biosynthesis. Its function is as follows. Catalyzes the hydrolysis of glutamine to glutamate and ammonia as part of the biosynthesis of pyridoxal 5'-phosphate. The resulting ammonia molecule is channeled to the active site of PdxS. The polypeptide is Pyridoxal 5'-phosphate synthase subunit PdxT (Halobacterium salinarum (strain ATCC 29341 / DSM 671 / R1)).